A 353-amino-acid chain; its full sequence is Dihydroorotate dehydrogenase (quinone) (353 aa).

FMN is bound by residues 67-71 (AGFDK) and T91. Residue K71 coordinates substrate. 116–120 (NRMGF) provides a ligand contact to substrate. The FMN site is built by N144 and N177. N177 provides a ligand contact to substrate. The Nucleophile role is filled by S180. A substrate-binding site is contributed by N182. Residues K215 and T243 each coordinate FMN. Residue 244–245 (NT) coordinates substrate. Residues G264, G293, and 314-315 (YT) contribute to the FMN site.

This sequence belongs to the dihydroorotate dehydrogenase family. Type 2 subfamily. As to quaternary structure, monomer. Requires FMN as cofactor.

Its subcellular location is the cell membrane. It carries out the reaction (S)-dihydroorotate + a quinone = orotate + a quinol. It functions in the pathway pyrimidine metabolism; UMP biosynthesis via de novo pathway; orotate from (S)-dihydroorotate (quinone route): step 1/1. Catalyzes the conversion of dihydroorotate to orotate with quinone as electron acceptor. In Gloeobacter violaceus (strain ATCC 29082 / PCC 7421), this protein is Dihydroorotate dehydrogenase (quinone).